The primary structure comprises 90 residues: U7-theraphotoxin-Hhn1g (90 aa).

The signal sequence occupies residues 1–19 (MKTAIFTVVLALAVFAVLS). Residues 20–50 (FGWEANEKALSEEFTELIHEKEAASETEARE) constitute a propeptide that is removed on maturation. 3 cysteine pairs are disulfide-bonded: Cys-51–Cys-65, Cys-58–Cys-70, and Cys-64–Cys-81.

The protein belongs to the neurotoxin 10 (Hwtx-1) family. 13 (Hntx-13) subfamily. Expressed by the venom gland.

The protein resides in the secreted. Ion channel inhibitor. The polypeptide is U7-theraphotoxin-Hhn1g (Cyriopagopus hainanus (Chinese bird spider)).